The chain runs to 250 residues: Global transcriptional regulator CodY (250 aa).

Positions 1–146 (MTLLEKTRKL…GATVVGLEIL (146 aa)) are GAF domain. The H-T-H motif DNA-binding region spans 194–213 (ASKIADKVGITRSVIVNALR).

Belongs to the CodY family.

The protein localises to the cytoplasm. Its function is as follows. DNA-binding global transcriptional regulator which is involved in the adaptive response to starvation and acts by directly or indirectly controlling the expression of numerous genes in response to nutrient availability. During rapid exponential growth, CodY is highly active and represses genes whose products allow adaptation to nutrient depletion. The sequence is that of Global transcriptional regulator CodY from Caldanaerobacter subterraneus subsp. tengcongensis (strain DSM 15242 / JCM 11007 / NBRC 100824 / MB4) (Thermoanaerobacter tengcongensis).